Consider the following 445-residue polypeptide: Tryptophan 5-hydroxylase 1 (445 aa).

The ACT domain occupies 19 to 94 (AIIFSLKNEV…SIVSMNPTEH (76 aa)). Position 58 is a phosphoserine; by PKA (S58). Positions 236, 258, and 266 each coordinate L-tryptophan. Positions 273, 278, and 318 each coordinate Fe cation. Residues S337 and I367 each coordinate L-tryptophan.

Belongs to the biopterin-dependent aromatic amino acid hydroxylase family. In terms of assembly, homotetramer. The cofactor is Fe(2+).

The enzyme catalyses (6R)-L-erythro-5,6,7,8-tetrahydrobiopterin + L-tryptophan + O2 = 5-hydroxy-L-tryptophan + (4aS,6R)-4a-hydroxy-L-erythro-5,6,7,8-tetrahydrobiopterin. The protein operates within aromatic compound metabolism; serotonin biosynthesis; serotonin from L-tryptophan: step 1/2. Oxidizes L-tryptophan to 5-hydroxy-l-tryptophan in the rate-determining step of serotonin biosynthesis. The sequence is that of Tryptophan 5-hydroxylase 1 (TPH1) from Gallus gallus (Chicken).